The sequence spans 59 residues: Large ribosomal subunit protein bL32 (59 aa).

This sequence belongs to the bacterial ribosomal protein bL32 family.

The sequence is that of Large ribosomal subunit protein bL32 from Lactiplantibacillus plantarum (strain ATCC BAA-793 / NCIMB 8826 / WCFS1) (Lactobacillus plantarum).